A 296-amino-acid chain; its full sequence is Cell division protein DivIB (296 aa).

At Met-1–Arg-25 the chain is on the cytoplasmic side. Residues Leu-26–Phe-46 form a helical membrane-spanning segment. At Thr-47–Ser-296 the chain is on the extracellular side. The POTRA domain maps to Ser-50–Tyr-118.

Belongs to the FtsQ/DivIB family. DivIB subfamily.

The protein resides in the cell membrane. Its function is as follows. Cell division protein that may be involved in stabilizing or promoting the assembly of the division complex. This chain is Cell division protein DivIB, found in Macrococcus caseolyticus (strain JCSC5402) (Macrococcoides caseolyticum).